The sequence spans 542 residues: Ribulokinase 2 (542 aa).

The protein belongs to the ribulokinase family.

It carries out the reaction D-ribulose + ATP = D-ribulose 5-phosphate + ADP + H(+). The catalysed reaction is L-ribulose + ATP = L-ribulose 5-phosphate + ADP + H(+). It functions in the pathway carbohydrate degradation; L-arabinose degradation via L-ribulose; D-xylulose 5-phosphate from L-arabinose (bacterial route): step 2/3. The sequence is that of Ribulokinase 2 from Staphylococcus saprophyticus subsp. saprophyticus (strain ATCC 15305 / DSM 20229 / NCIMB 8711 / NCTC 7292 / S-41).